The following is a 290-amino-acid chain: Bifunctional protein FolD (290 aa).

NADP(+) is bound by residues 169–171 (GAS), Ile-194, and Ile-235.

The protein belongs to the tetrahydrofolate dehydrogenase/cyclohydrolase family. Homodimer.

The enzyme catalyses (6R)-5,10-methylene-5,6,7,8-tetrahydrofolate + NADP(+) = (6R)-5,10-methenyltetrahydrofolate + NADPH. It carries out the reaction (6R)-5,10-methenyltetrahydrofolate + H2O = (6R)-10-formyltetrahydrofolate + H(+). It participates in one-carbon metabolism; tetrahydrofolate interconversion. In terms of biological role, catalyzes the oxidation of 5,10-methylenetetrahydrofolate to 5,10-methenyltetrahydrofolate and then the hydrolysis of 5,10-methenyltetrahydrofolate to 10-formyltetrahydrofolate. This chain is Bifunctional protein FolD, found in Helicobacter pylori (strain J99 / ATCC 700824) (Campylobacter pylori J99).